We begin with the raw amino-acid sequence, 379 residues long: tRNA-specific 2-thiouridylase MnmA (379 aa).

ATP contacts are provided by residues 16 to 23 and methionine 42; that span reads GLSGGVDS. The segment at 102–104 is interaction with target base in tRNA; the sequence is NPD. The active-site Nucleophile is the cysteine 107. A disulfide bridge links cysteine 107 with cysteine 204. Glycine 131 is a binding site for ATP. Residues 154 to 156 form an interaction with tRNA region; it reads KDQ. Cysteine 204 (cysteine persulfide intermediate) is an active-site residue. The interaction with tRNA stretch occupies residues 316–317; it reads RY.

The protein belongs to the MnmA/TRMU family.

The protein resides in the cytoplasm. The catalysed reaction is S-sulfanyl-L-cysteinyl-[protein] + uridine(34) in tRNA + AH2 + ATP = 2-thiouridine(34) in tRNA + L-cysteinyl-[protein] + A + AMP + diphosphate + H(+). In terms of biological role, catalyzes the 2-thiolation of uridine at the wobble position (U34) of tRNA, leading to the formation of s(2)U34. The protein is tRNA-specific 2-thiouridylase MnmA of Hydrogenovibrio crunogenus (strain DSM 25203 / XCL-2) (Thiomicrospira crunogena).